A 626-amino-acid chain; its full sequence is ATP-dependent rRNA helicase spb4 (626 aa).

The short motif at 14-42 (WDALTPSLAEWVLDAISSMGFEKMTPVQA) is the Q motif element. In terms of domain architecture, Helicase ATP-binding spans 45-246 (IPLFMGNKDV…RVGLRNPVKI (202 aa)). 58 to 65 (AVTGSGKT) is a binding site for ATP. The short motif at 194-197 (DEAD) is the DEAD box element. The region spanning 279–437 (ALLSLLSQLE…TTGEAAKILI (159 aa)) is the Helicase C-terminal domain. The segment at 553–599 (QREAWSQKHEKQDLKELKREKKKRKREIERLEKMTDEEKKEEQAKEK) is disordered. 2 stretches are compositionally biased toward basic and acidic residues: residues 554 to 571 (REAW…ELKR) and 578 to 599 (REIE…AKEK). A coiled-coil region spans residues 558–620 (SQKHEKQDLK…RKIEDDADVE (63 aa)).

The protein belongs to the DEAD box helicase family. DDX55/SPB4 subfamily. As to quaternary structure, component of pre-60S ribosomal complexes.

The protein resides in the nucleus. Its subcellular location is the nucleolus. It catalyses the reaction ATP + H2O = ADP + phosphate + H(+). Its function is as follows. ATP-binding RNA helicase involved in the biogenesis of 60S ribosomal subunits. Binds 90S pre-ribosomal particles and dissociates from pre-60S ribosomal particles after processing of 27SB pre-rRNA. Required for the normal formation of 18S rRNA through the processing of pre-rRNAs at sites A0, A1 and A2, and the normal formation of 25S and 5.8S rRNAs through the processing of pre-rRNAs at sites C1 and C2. This Botryotinia fuckeliana (strain B05.10) (Noble rot fungus) protein is ATP-dependent rRNA helicase spb4.